We begin with the raw amino-acid sequence, 232 residues long: Proteasome subunit alpha (232 aa).

This sequence belongs to the peptidase T1A family. The 20S proteasome core is composed of 14 alpha and 14 beta subunits that assemble into four stacked heptameric rings, resulting in a barrel-shaped structure. The two inner rings, each composed of seven catalytic beta subunits, are sandwiched by two outer rings, each composed of seven alpha subunits. The catalytic chamber with the active sites is on the inside of the barrel. Has a gated structure, the ends of the cylinder being occluded by the N-termini of the alpha-subunits. Is capped by the proteasome-associated ATPase, ARC.

The protein resides in the cytoplasm. The protein operates within protein degradation; proteasomal Pup-dependent pathway. Its activity is regulated as follows. The formation of the proteasomal ATPase ARC-20S proteasome complex, likely via the docking of the C-termini of ARC into the intersubunit pockets in the alpha-rings, may trigger opening of the gate for substrate entry. Interconversion between the open-gate and close-gate conformations leads to a dynamic regulation of the 20S proteasome proteolysis activity. Its function is as follows. Component of the proteasome core, a large protease complex with broad specificity involved in protein degradation. This Acidimicrobium ferrooxidans (strain DSM 10331 / JCM 15462 / NBRC 103882 / ICP) protein is Proteasome subunit alpha.